We begin with the raw amino-acid sequence, 201 residues long: GTP cyclohydrolase 1 (201 aa).

The disordered stretch occupies residues 1-20 (MDATVKKMSPETSRPSREEA). Zn(2+)-binding residues include Cys91, His94, and Cys162.

Belongs to the GTP cyclohydrolase I family. As to quaternary structure, homomer.

The catalysed reaction is GTP + H2O = 7,8-dihydroneopterin 3'-triphosphate + formate + H(+). The protein operates within cofactor biosynthesis; 7,8-dihydroneopterin triphosphate biosynthesis; 7,8-dihydroneopterin triphosphate from GTP: step 1/1. The polypeptide is GTP cyclohydrolase 1 (Allorhizobium ampelinum (strain ATCC BAA-846 / DSM 112012 / S4) (Agrobacterium vitis (strain S4))).